A 560-amino-acid polypeptide reads, in one-letter code: Membrane protein insertase YidC (560 aa).

A helical transmembrane segment spans residues isoleucine 7–tyrosine 27. A disordered region spans residues alanine 43–leucine 72. 4 helical membrane passes run isoleucine 367–phenylalanine 387, leucine 437–leucine 457, phenylalanine 468–methionine 488, and proline 515–valine 535.

This sequence belongs to the OXA1/ALB3/YidC family. Type 1 subfamily. As to quaternary structure, interacts with the Sec translocase complex via SecD. Specifically interacts with transmembrane segments of nascent integral membrane proteins during membrane integration.

Its subcellular location is the cell inner membrane. Its function is as follows. Required for the insertion and/or proper folding and/or complex formation of integral membrane proteins into the membrane. Involved in integration of membrane proteins that insert both dependently and independently of the Sec translocase complex, as well as at least some lipoproteins. Aids folding of multispanning membrane proteins. In Pseudomonas fluorescens (strain SBW25), this protein is Membrane protein insertase YidC.